Consider the following 320-residue polypeptide: Epoxidase atD (320 aa).

N-linked (GlcNAc...) asparagine glycosylation is found at Asn245 and Asn299.

Its pathway is secondary metabolite biosynthesis. Epoxidase; part of the gene cluster that mediates the biosynthesis of terreic acid, a quinone epoxide inhibitor of Bruton's tyrosine kinase. The first step of the pathway is the synthesis of 6-methylsalicylic acid (6-MSA) by the 6-methylsalicylic acid synthase atX. In the biosynthesis of 6-MSA, atX utilizes one acetyl-CoA and three malonyl-CoAs as its substrates and catalyzes a series of programmed reactions including Claisen condensation, reduction, aldol cyclization, and the hydrolytic cleavage that yields 6-MSA. The 6-methylsalicylate 1-monooxygenase atA then catalyzes the decarboxylative hydroxylation of 6-MSA to 3-methylcatechol. The next step is the conversion of 3-methylcatechol to 3-methyl-1,2,4-benzenetriol by cytochrome P450 monooxygenase atE, which is enhanced by cytochrome P450 monooxygenase atG. Then, the epoxidase atD catalyzes the epoxidation and hydroxyl oxidation of 3-methyl-1,2,4-benzenetriol to terremutin. Lastly, GMC oxidoreductase atC oxidizes terremutin to terreic acid. The sequence is that of Epoxidase atD from Aspergillus terreus (strain NIH 2624 / FGSC A1156).